The following is a 271-amino-acid chain: CAAX prenyl protease 2 (271 aa).

At M1–P9 the chain is on the extracellular side. Residues K10–L30 form a helical membrane-spanning segment. Residues S31–G38 lie on the Cytoplasmic side of the membrane. The chain crosses the membrane as a helical span at residues I39–I59. Topologically, residues A60–N82 are extracellular. The helical transmembrane segment at L83–I105 threads the bilayer. Residues P106–D125 lie on the Cytoplasmic side of the membrane. Residues F126 to F149 traverse the membrane as a helical segment. The active-site Proton donor/acceptor is E140. Topologically, residues D150–F159 are extracellular. The helical transmembrane segment at K160–V179 threads the bilayer. H173 serves as the catalytic Proton donor/acceptor. The Cytoplasmic portion of the chain corresponds to N180–I192. Residues W193–C213 traverse the membrane as a helical segment. The Extracellular portion of the chain corresponds to L214–S219. A helical transmembrane segment spans residues I220–L237. Residues A238–T243 lie on the Cytoplasmic side of the membrane. The chain crosses the membrane as a helical span at residues K244 to K263. Residues K264–G271 lie on the Extracellular side of the membrane.

It belongs to the peptidase U48 family.

It localises to the cell membrane. It catalyses the reaction Hydrolyzes the peptide bond -P2-(S-farnesyl or geranylgeranyl)C-P1'-P2'-P3'-COOH where P1' and P2' are amino acids with aliphatic sidechains and P3' is any C-terminal residue.. Activity is unaffected by metalloprotease inhibitors 5 mM EDTA and 5 mM Zn(2+). Activity partially inhibited by 1,10-phenanthroline and 1,7-phenanthroline. Functionally, protease involved in the processing of a variety of prenylated proteins containing the C-terminal CAAX motif, where C is a cysteine modified with an isoprenoid lipid, A is an aliphatic amino acid and X is any C-terminal amino acid. Proteolytically removes the C-terminal three residues of farnesylated proteins, leaving the prenylated cysteine as the new C-terminus. Hydrolysis depends on a farnesylated cysteine residue and no activity is shown towards geranylgeranylated peptides. This is CAAX prenyl protease 2 from Methanococcus maripaludis (strain DSM 14266 / JCM 13030 / NBRC 101832 / S2 / LL).